Reading from the N-terminus, the 397-residue chain is MEGLIEELRSRVRELEEELDRVRNGQHEGHRTKIEKMSAEVVDSNPYSRLMALKRMGIVENYEKIRTFTVAVVGVGGVGSVTAEMLTRCGIGKLLLFDYDKVELANMNRLFFQPHQAGLSKVEAAEHTLRNINPDVQFEVHNYNITTLDNFQHFMDRISKGGLKEGSPVDLVLSCVDNFEARMAINTACNELGQVWMESGVSENAVSGHIQLIKPGETACFACAPPLVVAANIDEKTLKREGVCAASLPTTMGVVAGILVQNVLKYLLNFGTVSFYLGYNAMQDFFPTMAMKPNPQCDDKYCRKQQEEFKLKEAAKPKQETVVVEEEEVVHEDNDWGIELVSEVSEEELKAASGPVPDLPEGIKVAYTIPITKPTSGFTVEDSEQSLDELMAQMKNL.

Residues Gly-77, Asp-98, Lys-121, Asn-144, and Asn-178 each contribute to the ATP site. Positions 220 and 223 each coordinate Zn(2+). Cys-244 functions as the Glycyl thioester intermediate in the catalytic mechanism. Zn(2+)-binding residues include Cys-297 and Cys-302. Positions 329–341 (VVHEDNDWGIELV) match the UFM1-interacting sequence (UIS) motif. The tract at residues 342-372 (SEVSEEELKAASGPVPDLPEGIKVAYTIPIT) is linker. Positions 382 to 397 (DSEQSLDELMAQMKNL) match the UFC1-binding sequence (UFC) motif.

Belongs to the ubiquitin-activating E1 family. UBA5 subfamily. Homodimer; homodimerization is required for ufm1 activation. Interacts (via UIS motif) with ufm1; binds ufm1 via a trans-binding mechanism in which ufm1 interacts with distinct sites in both subunits of the uba5 homodimer. Interacts (via C-terminus) with ufc1.

The protein localises to the cytoplasm. Its subcellular location is the nucleus. It is found in the endoplasmic reticulum membrane. It localises to the golgi apparatus. In terms of biological role, E1-like enzyme which specifically catalyzes the first step in ufmylation. Activates ufm1 by first adenylating its C-terminal glycine residue with ATP, and thereafter linking this residue to the side chain of a cysteine residue in E1, yielding a ufm1-E1 thioester and free AMP. Activates ufm1 via a trans-binding mechanism, in which ufm1 interacts with distinct sites in both subunits of the uba5 homodimer. Trans-binding also promotes stabilization of the uba5 homodimer, and enhances ATP-binding. Transfer of ufm1 from uba5 to the E2-like enzyme UFC1 also takes place using a trans mechanism. Ufmylation plays a key role in various processes, such as ribosome recycling, response to DNA damage, interferon response or reticulophagy (also called ER-phagy). The chain is Ubiquitin-like modifier-activating enzyme 5 from Xenopus laevis (African clawed frog).